The following is a 657-amino-acid chain: MTQLAIGKPTPLGAHYDGQGVNFTLFSAHAERVELCVFDANGQEHRYDLPGHSGDIWHGYLPDARPGLRYGYRVHGPWQPAEGHRFNPAKLLIDPCARQIDGEFKDNPLLHAGHNEPDYRDNASIAPKCVVVVDHYDWEDDAPPRMPWGCTIIYEAHVKGLTYLHPEIPVEIRGTYKALGHPVMINYLKQLGITALELLPVAQFASEPRLQRMGLSNYWGYNPVAMFALHPAYACSPETALDEFRDAIKALHKAGIEVILDIVLNHSAELDLDGPLFSLRGIDNRSYYWIREDGDYHNWTGCGNTLNLSHPAVVDYASACLRYWVETCHVDGFRFDLAAVMGRTPEFRQDAPLFTAIQNCPVLSQVKLIAEPWDIAPGGYQVGNFPPLFAEWNDHFRDAARRFWLHYDLPLGAFAGRFAASSDVFKRNGRLPSAAINLVTAHDGFTLRDCVCFNHKHNEANGEENRDGTNNNYSNNHGKEGLGGTLDLVERRRDSIHALLTTLLLSQGTPMLLAGDEHGHSQRGNNNAYCQDNQLTWLDWSQASSGLTAFTAALIHLRKRIPALMENRWWEEGDGNVRWLNRYAQPLSTDEWQNGPKQLQILLSDRFLIAINATLEVTEIVLPAGEWHAIPPFAGEDNPVITAVWQGPAHGLCVFQR.

The active-site Nucleophile is the aspartate 336. Glutamate 371 functions as the Proton donor in the catalytic mechanism. The disordered stretch occupies residues 460–479 (ANGEENRDGTNNNYSNNHGK).

The protein belongs to the glycosyl hydrolase 13 family.

It carries out the reaction Hydrolysis of (1-&gt;6)-alpha-D-glucosidic linkages to branches with degrees of polymerization of three or four glucose residues in limit dextrin.. It functions in the pathway glycan degradation; glycogen degradation. Removes maltotriose and maltotetraose chains that are attached by 1,6-alpha-linkage to the limit dextrin main chain, generating a debranched limit dextrin. The chain is Glycogen debranching enzyme from Escherichia coli O1:K1 / APEC.